The chain runs to 410 residues: MENKRIDTIESALEDIGQGKLVIVIDDEERENEGDFIAAADKVTTEMINFITKEARGLLCVAVTMDRAKELQLEPMVQRNTSQHETNFTVSVDAIAEGVTTGISVYDRAMTIKMLGDETSHADSFSRPGHIFPLRAMDGGVLRRVGHTEAAVDLARLAGCSPVGLLCEILHEDGSMARLADLMTIKEKFGLKLITIKDLVAFQMRRSKLVQRAVESNIPTAYGEFRLMAYESFTDQQNHMAFVKGDVSTDEPVLVRVHSQCATGDTFASLRCDCGNQLASALRMIEKEGRGVLVYLMQEGRGIGLINKLKAYNLQDDGFDTVEANEELGFKADLRDYGIGAQILQDLGVRKMRLMTNNPKKVVGLEGYGLEIVERVPLEIEPNAVNKTYLETKRDKMGHMISCSCGSGNH.

Positions 1–205 are DHBP synthase; it reads MENKRIDTIE…IKDLVAFQMR (205 aa). D-ribulose 5-phosphate is bound by residues 30-31, Asp35, 144-148, and Glu168; these read RE and RVGHT. Glu31 contributes to the Mg(2+) binding site. His147 is a binding site for Mg(2+). Residues 206–410 form a GTP cyclohydrolase II region; that stretch reads RSKLVQRAVE…ISCSCGSGNH (205 aa). 256–260 serves as a coordination point for GTP; it reads RVHSQ. Positions 261, 272, and 274 each coordinate Zn(2+). Residues Gln277, 299 to 301, and Thr321 contribute to the GTP site; that span reads EGR. Asp333 serves as the catalytic Proton acceptor; for GTP cyclohydrolase activity. Arg335 serves as the catalytic Nucleophile; for GTP cyclohydrolase activity. GTP-binding residues include Thr356 and Lys361.

In the N-terminal section; belongs to the DHBP synthase family. The protein in the C-terminal section; belongs to the GTP cyclohydrolase II family. Mg(2+) serves as cofactor. Mn(2+) is required as a cofactor. It depends on Zn(2+) as a cofactor.

The catalysed reaction is D-ribulose 5-phosphate = (2S)-2-hydroxy-3-oxobutyl phosphate + formate + H(+). It carries out the reaction GTP + 4 H2O = 2,5-diamino-6-hydroxy-4-(5-phosphoribosylamino)-pyrimidine + formate + 2 phosphate + 3 H(+). It functions in the pathway cofactor biosynthesis; riboflavin biosynthesis; 2-hydroxy-3-oxobutyl phosphate from D-ribulose 5-phosphate: step 1/1. Its pathway is cofactor biosynthesis; riboflavin biosynthesis; 5-amino-6-(D-ribitylamino)uracil from GTP: step 1/4. Catalyzes the conversion of D-ribulose 5-phosphate to formate and 3,4-dihydroxy-2-butanone 4-phosphate. Functionally, catalyzes the conversion of GTP to 2,5-diamino-6-ribosylamino-4(3H)-pyrimidinone 5'-phosphate (DARP), formate and pyrophosphate. This Chlorobium phaeovibrioides (strain DSM 265 / 1930) (Prosthecochloris vibrioformis (strain DSM 265)) protein is Riboflavin biosynthesis protein RibBA.